Here is a 485-residue protein sequence, read N- to C-terminus: uncharacterized protein (485 aa).

The first 23 residues, 1 to 23 (MRRRVCTVVRAVVCLLSTSLLTT), serve as a signal peptide directing secretion. A lipid anchor (N-palmitoyl cysteine) is attached at Cys-24. Cys-24 is lipidated: S-diacylglycerol cysteine. A compositionally biased stretch (low complexity) spans 308-327 (SAASSPAQCPSSPSSSSSSS). The tract at residues 308–331 (SAASSPAQCPSSPSSSSSSSTNAG) is disordered.

The protein belongs to the TP013X lipoprotein family.

It is found in the cell membrane. This is an uncharacterized protein from Treponema pallidum (strain Nichols).